We begin with the raw amino-acid sequence, 566 residues long: Ubiquitin carboxyl-terminal hydrolase 21 (566 aa).

Basic and acidic residues-rich tracts occupy residues 1-14 and 58-70; these read MPQASEHRLGRTRE and PPDERLKKLELGR. Disordered regions lie at residues 1–103 and 146–169; these read MPQA…LPLP and PEPPTLRRSTSLRRLGGFPGPPTL. Low complexity-rich tracts occupy residues 71-81 and 151-160; these read GRTSGSRPRGP and LRRSTSLRRL. Positions 134–152 match the Nuclear export signal motif; it reads ELGAALSRLALRPEPPTLR. The region spanning 212–559 is the USP domain; the sequence is VGLRNLGNTC…EGYVLFYQLM (348 aa). The Nucleophile role is filled by Cys-221. The segment at 324–349 is disordered; sequence APPILASGPVPSPPRRGGGALHEEPE. The Zn(2+) site is built by Cys-385, Cys-388, Cys-438, and Cys-441. His-519 serves as the catalytic Proton acceptor.

This sequence belongs to the peptidase C19 family. USP21 subfamily. Interacts with BEND3.

The protein localises to the cytoplasm. It localises to the nucleus. The enzyme catalyses Thiol-dependent hydrolysis of ester, thioester, amide, peptide and isopeptide bonds formed by the C-terminal Gly of ubiquitin (a 76-residue protein attached to proteins as an intracellular targeting signal).. Deubiquitinates histone H2A, a specific tag for epigenetic transcriptional repression, thereby acting as a coactivator. Deubiquitination of histone H2A releaves the repression of di- and trimethylation of histone H3 at 'Lys-4', resulting in regulation of transcriptional initiation. Regulates gene expression via histone H2A deubiquitination. Deubiquitinates BAZ2A/TIP5 leading to its stabilization. Also capable of removing NEDD8 from NEDD8 conjugates but has no effect on Sentrin-1 conjugates. Also acts as a negative regulator of the ribosome quality control (RQC) by mediating deubiquitination of 40S ribosomal proteins RPS10/eS10 and RPS20/uS10, thereby antagonizing ZNF598-mediated 40S ubiquitination. The polypeptide is Ubiquitin carboxyl-terminal hydrolase 21 (Mus musculus (Mouse)).